Consider the following 373-residue polypeptide: 3-dehydroquinate synthase (373 aa).

NAD(+) is bound by residues 120-124, 144-145, Lys157, Lys166, and 184-187; these read GVVGD, TT, and FLKT. Residues Glu199, His262, and His278 each contribute to the Zn(2+) site.

This sequence belongs to the sugar phosphate cyclases superfamily. Dehydroquinate synthase family. It depends on NAD(+) as a cofactor. The cofactor is Co(2+). Zn(2+) serves as cofactor.

It localises to the cytoplasm. It catalyses the reaction 7-phospho-2-dehydro-3-deoxy-D-arabino-heptonate = 3-dehydroquinate + phosphate. The protein operates within metabolic intermediate biosynthesis; chorismate biosynthesis; chorismate from D-erythrose 4-phosphate and phosphoenolpyruvate: step 2/7. Its function is as follows. Catalyzes the conversion of 3-deoxy-D-arabino-heptulosonate 7-phosphate (DAHP) to dehydroquinate (DHQ). This is 3-dehydroquinate synthase from Clostridium tetani (strain Massachusetts / E88).